Here is a 554-residue protein sequence, read N- to C-terminus: Phosphomethylpyrimidine synthase (554 aa).

Residues asparagine 188, methionine 217, tyrosine 246, histidine 282, 302–304, 343–346, and glutamate 382 each bind substrate; these read SRG and DGLR. Histidine 386 contributes to the Zn(2+) binding site. Residue tyrosine 409 participates in substrate binding. Histidine 450 contacts Zn(2+). 3 residues coordinate [4Fe-4S] cluster: cysteine 530, cysteine 533, and cysteine 538.

The protein belongs to the ThiC family. Homodimer. It depends on [4Fe-4S] cluster as a cofactor.

The enzyme catalyses 5-amino-1-(5-phospho-beta-D-ribosyl)imidazole + S-adenosyl-L-methionine = 4-amino-2-methyl-5-(phosphooxymethyl)pyrimidine + CO + 5'-deoxyadenosine + formate + L-methionine + 3 H(+). It functions in the pathway cofactor biosynthesis; thiamine diphosphate biosynthesis. Catalyzes the synthesis of the hydroxymethylpyrimidine phosphate (HMP-P) moiety of thiamine from aminoimidazole ribotide (AIR) in a radical S-adenosyl-L-methionine (SAM)-dependent reaction. The sequence is that of Phosphomethylpyrimidine synthase from Coxiella burnetii (strain RSA 493 / Nine Mile phase I).